The following is a 38-amino-acid chain: A2-specific pheromone (38 aa).

Cysteine methyl ester is present on cysteine 35. The S-farnesyl cysteine moiety is linked to residue cysteine 35. The propeptide at leucine 36–alanine 38 is removed in mature form.

It is found in the cell membrane. Mating pheromone for A2 allele. The protein is A2-specific pheromone (MFA2) of Mycosarcoma maydis (Corn smut fungus).